The chain runs to 332 residues: Ferredoxin--NADP reductase 1 (332 aa).

FAD is bound by residues Asp-35, Lys-43, Phe-48, Val-88, Phe-123, Asp-284, and Thr-325.

It belongs to the ferredoxin--NADP reductase type 2 family. Homodimer. FAD serves as cofactor.

It carries out the reaction 2 reduced [2Fe-2S]-[ferredoxin] + NADP(+) + H(+) = 2 oxidized [2Fe-2S]-[ferredoxin] + NADPH. This chain is Ferredoxin--NADP reductase 1, found in Listeria innocua serovar 6a (strain ATCC BAA-680 / CLIP 11262).